Here is a 218-residue protein sequence, read N- to C-terminus: Variable small protein 8 (218 aa).

An N-terminal signal peptide occupies residues 1-18 (MRKRISAIIMTLFMVFMS). Cys19 carries N-palmitoyl cysteine lipidation. Residue Cys19 is the site of S-diacylglycerol cysteine attachment.

The protein belongs to the variable small protein (Vsp) family.

It is found in the cell outer membrane. Functionally, the Vlp and Vsp proteins are antigenically distinct proteins, only one vlp or vsp gene is transcriptionally active at any one time. Switching between these genes is a mechanism of host immune response evasion. The chain is Variable small protein 8 from Borrelia hermsii.